We begin with the raw amino-acid sequence, 319 residues long: MKPENKLPVLDLISAEMKTVVNTLQPDLPPWPATGTIAEQRQYYTLERRFWNVGAPEMATRAYRVPTKYGQVKTRIFYPQPDRPATLFYLHGGGFILGNLDTHDRIMRLLASYSQCTVIGIDYTLSPEARFPQAIEEIVAACCYFHQQAEDYQINMSRIGFAGDSAGAMLALASALWLRDKQIDCGKVAGVLLWYGLYGLRDSVTRRLLGGVWDGLTQQDLQMYEEAYLSNDADRESPYYCLFNNDLTREVPPCFIAGAEFDPLLDDSRLLYQTLAAHQQPCEFKLYPGTLHAFLHYSRMMKTADEALRDGAQFFTAQL.

The short motif at 91-93 is the Involved in the stabilization of the negatively charged intermediate by the formation of the oxyanion hole element; it reads HGG. Residues Ser165, Asp262, and His292 contribute to the active site.

This sequence belongs to the 'GDXG' lipolytic enzyme family. Homodimer. Interacts with MalT and MelA.

Its subcellular location is the cytoplasm. Functionally, displays esterase activity towards short chain fatty esters (acyl chain length of up to 8 carbons). Able to hydrolyze triacetylglycerol (triacetin) and tributyrylglycerol (tributyrin), but not trioleylglycerol (triolein) or cholesterol oleate. Negatively regulates MalT activity by antagonizing maltotriose binding. Inhibits MelA galactosidase activity. The sequence is that of Acetyl esterase from Escherichia coli O6:H1 (strain CFT073 / ATCC 700928 / UPEC).